We begin with the raw amino-acid sequence, 339 residues long: Adenylosuccinate synthetase (339 aa).

GTP-binding positions include 12 to 18 and 42 to 44; these read GDEGKGS and GHS. Asp-13 functions as the Proton acceptor in the catalytic mechanism. Residues Asp-13 and Gly-42 each contribute to the Mg(2+) site. Residues 13–16, 40–43, Thr-127, Arg-141, Gln-179, Thr-194, and Arg-256 each bind IMP; these read DEGK and NAGH. The active-site Proton donor is the His-43. 252-258 contributes to the substrate binding site; that stretch reads TVTGRRR. GTP contacts are provided by residues Arg-258, 284–286, and 324–326; these read MLD and KTG.

It belongs to the adenylosuccinate synthetase family. As to quaternary structure, homodimer. Requires Mg(2+) as cofactor.

It localises to the cytoplasm. The enzyme catalyses IMP + L-aspartate + GTP = N(6)-(1,2-dicarboxyethyl)-AMP + GDP + phosphate + 2 H(+). The protein operates within purine metabolism; AMP biosynthesis via de novo pathway; AMP from IMP: step 1/2. Its function is as follows. Plays an important role in the de novo pathway of purine nucleotide biosynthesis. Catalyzes the first committed step in the biosynthesis of AMP from IMP. This Pyrococcus sp. (strain ST700) protein is Adenylosuccinate synthetase.